A 332-amino-acid chain; its full sequence is MSISQNKKSYPRLLADIGGTNARFALEVEANIIKNIEIFPCNDYNTVVDAVKVYLNKFGNPTIKYGAFAIANPVVGDWVQMTNHHWAFSIETTRQALNLEVLILINDFTAQAYAISRMSSSELIQIGGNFCTINAPKAVLGPGTGLGVSGLIPCGNGDYIALSGEGGHTSFSPFDDTEVMIWQYAKKKYGHVSTERFLSGSGLVLIYEALADREGIKSAKISPELISEQALSGKSPLCRLTLDIFCAMLGTISADLALTLGARGGVYLCGGIIPRFIDYFKTSPFRVRFEDKGRFDAYLAAIPVYVVLAKYPGIFGVAVALENHLKDYFSKK.

15-20 (ADIGGT) contributes to the ATP binding site.

The protein belongs to the bacterial glucokinase family.

The protein resides in the cytoplasm. It catalyses the reaction D-glucose + ATP = D-glucose 6-phosphate + ADP + H(+). In Campylobacter jejuni subsp. doylei (strain ATCC BAA-1458 / RM4099 / 269.97), this protein is Glucokinase.